The following is a 167-amino-acid chain: CDP-archaeol synthase (167 aa).

The next 5 membrane-spanning stretches (helical) occupy residues 4–24 (ILEA…PVIL), 51–71 (GFLG…IIYP), 80–100 (FKVS…GSFI), 104–124 (LNLP…LISA), and 139–158 (VLLL…VLAY).

It belongs to the CDP-archaeol synthase family. Mg(2+) serves as cofactor.

The protein resides in the cell membrane. The enzyme catalyses 2,3-bis-O-(geranylgeranyl)-sn-glycerol 1-phosphate + CTP + H(+) = CDP-2,3-bis-O-(geranylgeranyl)-sn-glycerol + diphosphate. It functions in the pathway membrane lipid metabolism; glycerophospholipid metabolism. Functionally, catalyzes the formation of CDP-2,3-bis-(O-geranylgeranyl)-sn-glycerol (CDP-archaeol) from 2,3-bis-(O-geranylgeranyl)-sn-glycerol 1-phosphate (DGGGP) and CTP. This reaction is the third ether-bond-formation step in the biosynthesis of archaeal membrane lipids. This Pyrococcus furiosus (strain ATCC 43587 / DSM 3638 / JCM 8422 / Vc1) protein is CDP-archaeol synthase.